Consider the following 439-residue polypeptide: 23S rRNA (uracil(1939)-C(5))-methyltransferase RlmD (439 aa).

Positions 10–68 constitute a TRAM domain; the sequence is QKKLRAAFTTIVQDLDYQGLGVAKIQGKTWFIENALPQEQVQVQVIEEKRQYGLGRVQK. The [4Fe-4S] cluster site is built by Cys-81, Cys-87, Cys-90, and Cys-168. The S-adenosyl-L-methionine site is built by Gln-271, Phe-300, Asn-305, Glu-321, Asp-348, and Asp-369. Residue Cys-395 is the Nucleophile of the active site.

It belongs to the class I-like SAM-binding methyltransferase superfamily. RNA M5U methyltransferase family. RlmD subfamily.

The enzyme catalyses uridine(1939) in 23S rRNA + S-adenosyl-L-methionine = 5-methyluridine(1939) in 23S rRNA + S-adenosyl-L-homocysteine + H(+). Its function is as follows. Catalyzes the formation of 5-methyl-uridine at position 1939 (m5U1939) in 23S rRNA. This chain is 23S rRNA (uracil(1939)-C(5))-methyltransferase RlmD, found in Histophilus somni (strain 129Pt) (Haemophilus somnus).